The sequence spans 364 residues: Phosphoserine aminotransferase (364 aa).

L-glutamate is bound at residue Arg-46. Residues 80–81 (AR), Trp-106, Thr-157, Asp-176, and Gln-199 contribute to the pyridoxal 5'-phosphate site. An N6-(pyridoxal phosphate)lysine modification is found at Lys-200. 241–242 (NT) is a pyridoxal 5'-phosphate binding site.

This sequence belongs to the class-V pyridoxal-phosphate-dependent aminotransferase family. SerC subfamily. Homodimer. Pyridoxal 5'-phosphate serves as cofactor.

It is found in the cytoplasm. The catalysed reaction is O-phospho-L-serine + 2-oxoglutarate = 3-phosphooxypyruvate + L-glutamate. It carries out the reaction 4-(phosphooxy)-L-threonine + 2-oxoglutarate = (R)-3-hydroxy-2-oxo-4-phosphooxybutanoate + L-glutamate. Its pathway is amino-acid biosynthesis; L-serine biosynthesis; L-serine from 3-phospho-D-glycerate: step 2/3. It participates in cofactor biosynthesis; pyridoxine 5'-phosphate biosynthesis; pyridoxine 5'-phosphate from D-erythrose 4-phosphate: step 3/5. Its function is as follows. Catalyzes the reversible conversion of 3-phosphohydroxypyruvate to phosphoserine and of 3-hydroxy-2-oxo-4-phosphonooxybutanoate to phosphohydroxythreonine. This Vibrio parahaemolyticus serotype O3:K6 (strain RIMD 2210633) protein is Phosphoserine aminotransferase.